Here is a 189-residue protein sequence, read N- to C-terminus: NADH-quinone oxidoreductase subunit B (189 aa).

Residues C39, C40, C104, and C135 each coordinate [4Fe-4S] cluster.

This sequence belongs to the complex I 20 kDa subunit family. As to quaternary structure, NDH-1 is composed of 14 different subunits. Subunits NuoB, C, D, E, F, and G constitute the peripheral sector of the complex. It depends on [4Fe-4S] cluster as a cofactor.

The protein localises to the cell inner membrane. It catalyses the reaction a quinone + NADH + 5 H(+)(in) = a quinol + NAD(+) + 4 H(+)(out). Functionally, NDH-1 shuttles electrons from NADH, via FMN and iron-sulfur (Fe-S) centers, to quinones in the respiratory chain. The immediate electron acceptor for the enzyme in this species is believed to be a menaquinone. Couples the redox reaction to proton translocation (for every two electrons transferred, four hydrogen ions are translocated across the cytoplasmic membrane), and thus conserves the redox energy in a proton gradient. This Chlorobium phaeobacteroides (strain DSM 266 / SMG 266 / 2430) protein is NADH-quinone oxidoreductase subunit B.